The primary structure comprises 729 residues: MASAAIFSSLRRRRSPSLEAFLAPVDLSGVALVQTLASISSEVVSCFTSVRFSFQRKNARSLIRKIEIFVVLFEFLVDSNWGSTTTRTRARRRSKSSVSESTALLCLKELYLLLYRSKILVDYCAQSSKLWLLLQNPSISGYFHDLNQEISTLLDVLPVNDLGLSDDIREQIELLQRQSRKARLYIDKNDESLRESFYSFLDGFENGKIPSSVDLRMFFVEKLGIRDSKSCRSEIEFLEEQIVNHDGDLEPTGSVINGFVAITRYCRFLLFGFEEDGMEWWIENNPKKPRKGFVAQEIGDTFITVPKDFVCPISLDLMTDPVIISTGQTYDRNSIARWIEEGHCTCPKTGQMLMDSRIVPNRALKNLIVQWCTASGISYESEFTDSPNESFASALPTKAAVEANKATVSILIKYLADGSQAAQTVAAREIRLLAKTGKENRAYIAEAGAIPHLCRLLTSENAIAQENSVTAMLNLSIYEKNKSRIMEEGDCLESIVSVLVSGLTVEAQENAAATLFSLSAVHEYKKRIAIVDQCVEALALLLQNGTPRGKKDAVTALYNLSTHPDNCSRMIEGGGVSSLVGALKNEGVAEEAAGALALLVRQSLGAEAIGKEDSAVAGLMGMMRCGTPRGKENAVAALLELCRSGGAAVAEKVLRAPAIAGLLQTLLFTGTKRARRKAASLARVFQRRENAAMRSGVYGFVGNTNGNRDGGFTTDVSVPISISISVPVL.

A U-box domain is found at 304-378 (TVPKDFVCPI…VQWCTASGIS (75 aa)). ARM repeat units lie at residues 438 to 477 (KENR…NLSI), 479 to 520 (EKNK…SLSA), 523 to 562 (EYKK…NLST), and 564 to 601 (PDNC…LLVR).

It catalyses the reaction S-ubiquitinyl-[E2 ubiquitin-conjugating enzyme]-L-cysteine + [acceptor protein]-L-lysine = [E2 ubiquitin-conjugating enzyme]-L-cysteine + N(6)-ubiquitinyl-[acceptor protein]-L-lysine.. It participates in protein modification; protein ubiquitination. In terms of biological role, functions as an E3 ubiquitin ligase. This is U-box domain-containing protein 17 (PUB17) from Arabidopsis thaliana (Mouse-ear cress).